Reading from the N-terminus, the 146-residue chain is 3-hydroxyacyl-[acyl-carrier-protein] dehydratase FabZ (146 aa).

The active site involves His48.

Belongs to the thioester dehydratase family. FabZ subfamily.

Its subcellular location is the cytoplasm. It catalyses the reaction a (3R)-hydroxyacyl-[ACP] = a (2E)-enoyl-[ACP] + H2O. Functionally, involved in unsaturated fatty acids biosynthesis. Catalyzes the dehydration of short chain beta-hydroxyacyl-ACPs and long chain saturated and unsaturated beta-hydroxyacyl-ACPs. This is 3-hydroxyacyl-[acyl-carrier-protein] dehydratase FabZ from Teredinibacter turnerae (strain ATCC 39867 / T7901).